A 605-amino-acid chain; its full sequence is Elongation factor 4 (605 aa).

In terms of domain architecture, tr-type G spans 4–186; the sequence is SSVRNFCIIA…AIVNKVPAPK (183 aa). Residues 16–21 and 133–136 each bind GTP; these read DHGKST and NKID.

This sequence belongs to the TRAFAC class translation factor GTPase superfamily. Classic translation factor GTPase family. LepA subfamily.

The protein localises to the cell membrane. The catalysed reaction is GTP + H2O = GDP + phosphate + H(+). Functionally, required for accurate and efficient protein synthesis under certain stress conditions. May act as a fidelity factor of the translation reaction, by catalyzing a one-codon backward translocation of tRNAs on improperly translocated ribosomes. Back-translocation proceeds from a post-translocation (POST) complex to a pre-translocation (PRE) complex, thus giving elongation factor G a second chance to translocate the tRNAs correctly. Binds to ribosomes in a GTP-dependent manner. The chain is Elongation factor 4 from Dehalococcoides mccartyi (strain ATCC BAA-2100 / JCM 16839 / KCTC 5957 / BAV1).